The primary structure comprises 1089 residues: MSAILNASVDSNTNIEYQTISSTQSQISEEQSERLHDRISKEQLEKLHEAFKAYPDQQLGVEELREVLEEVDIVFNDAVYTRLFLKINQNHDFRVDWNEFVSYLIFGFQEEDPSSQKESLILPISVPPVVRKSEHRSAVCCLALLKVKSDQAPLEEVAETSNFSFGGEDSPEASGMWVTASHEGMMKFWSSHMEPIRTASSESSNLPHAVYVMSYAFYNNGKVHSKLILGDYGGNVRILSYSPHLRGPFQAKPGAALIEVVWSDVLKGKIPLLIPKEYINLHSELISCVYYSLHMNALFASAEYRNTKKYRGRCPGIIMVSYGDKSNFRIPLGVTTFFVAESHNIVVTGGPDTFVRIWDVYIPTEPSAILTGHNGGIVMVFVQPEENKVYSVDYQKIIKVWNLQEHTLLQTYGDLVRLIHHTETDLTYYYHSHLRELIVAGRKLISIKCCPRVRVDLTDGNTHAAPVSVVLYNRLFRNIVTCGLDSYIIVWDPWTGRRKIIMKSCHTKMIYGETIDIEITAACFDPLEQFLLTGARDGSLKIWNYNNAVVIRNMSIQPDQEVTAVIWVVERILAMGWDRQVTEFNDVEGREYGDPKKWPKFHTDDITCGDVKLGEGVVTATYSGEIIFWKLETGQPYRRYSVMEPKRFIELKLSDEEKQMKRSKRWASRAPHSGSHMMSHTGSHMGSNVDQMSGSRSRGLAILQGQEEIREYGVNVPISVQAVLFLQNRPQTLHHGSVFISLDTGIIQVYSHHQRGGYMNEFLAVHKTGDCVLTMATDRKNRFLFTGTAFGYIKVWYIVNYCIPEAEKIHVCMPRLRLDFIFLRKETFLTRAKRVVRNQAEPLLVSSYKGHLKAINSISFINLPKIIITGSHDYSCRLWTQGGRYLGTLGSVLPWTKLSPFERAGDDTHVYRLPPDIKKVASSTTLKVISGLQVDRPMKRPDKAKTEEKEEDTAQALETNDLKKLFDRPLKDPILGKHFQLPGRSALDQRIDLDTTQSYIPVYTNLKVHPSEELERLPTPAVISRVQAENYLHQYLPVEGKVDLNDSALNIKLPSRRRSDRTNDPRNMRTAKTRGDMGLGHRSSHTSQN.

WD repeat units follow at residues 155 to 199, 207 to 249, 329 to 368, 372 to 411, 462 to 501, 514 to 553, and 601 to 641; these read EEVA…IRTA, PHAV…RGPF, RIPL…EPSA, GHNG…LLQT, THAA…RKII, TIDI…VIRN, and FHTD…RRYS. The tract at residues 661-684 is disordered; the sequence is KRSKRWASRAPHSGSHMMSHTGSH. The span at 672 to 684 shows a compositional bias: low complexity; it reads HSGSHMMSHTGSH. WD repeat units lie at residues 767-806 and 850-889; these read KTGD…IPEA and GHLK…LGTL. A disordered region spans residues 1049–1089; the sequence is LNIKLPSRRRSDRTNDPRNMRTAKTRGDMGLGHRSSHTSQN.

The chain is WD repeat-containing protein on Y chromosome from Drosophila willistoni (Fruit fly).